Reading from the N-terminus, the 1272-residue chain is MNNILSNSIKSLRYWDDQTVKAIFDKYQINVSGIYNISDDILESDLKLHIAQLLFLIVKHKEEFSVYLGETHLEKILKKLVKQFKYLEIRFLGKFKGKKQFFIDISDLHVDNILEKTEEIIKLIKKQYEYIKKQKKRRLDGVYVGIAPRKEKRGDAGAATAWSYIAFDFDVEEWKTNKMPTEEEIMEKLIKYLSKFVEKDILPHKVAFTGGGLRFILYPERPILEEELILLRMIAEDLGADIAMYDLARVDRLVGTYNYKEKYGSPRPCVTIAQLTDEEDIEKLLTPIILYEKFGIIENYKEFEVLFNEKREELYNKRGLNNITTTINRLIKKPNLNKTILQDINKRIYKWLYTIQDKLTKKLGKRWIEKLLSYLGIDYKYGKNGTRLDLWSLFFDDGKNPDCSIYINEGYNAVMVDFHDPNMRFIALAGLWMIKEFRDKIIEFLKLHNINPKPSTYRTVREIMNELLDRETIKIEAEGYLPKEAIIKAYQLSIEQGVPVFLKADTGRGKTYTLTRNTREIKEVFKKHAIAVAFPYKIQVLQVGAGLHADGVVVPMYYEDGKKLDKNTIHYLTIGTYDQVENMLNDLCYDTYKGEKIQVANEEDILLAIDEAHDLVIQKEFRKRAITGVKKCIDRAGGCVLLTATPELINLNNYPVIEVEFKDEKKLFERCSIHIAKNIIGEFCEYILLMFRQGWIKNAVVLVDNKKMIENIKYTLELYGFNKPIYVITRETVGIDKASKMIINEEKVPEEGLILATRVISEGVNIKNHVDLVWALYCKSATTIRQFIARCRNGGGELIVTAPFKEREEEPMIIDYNAMIEMFKENYKLLKEYLETDIEVLKELDKNYKKVLISQIQNAIYYDEEKKDWVLDEDEIAHIYNSLLEAHITRDYKLLKEYLEKTTGYEFAIKTIKELKESKLDKFLKYNYLEYLEKVSAKHIIIAFKEYGVNEIKNALEYNNYKKFKDCRDEYTPQLIKKHSKRINRSINVLKDVYNIPEVIEVYNLMLNKGKDDDKKSNLDENTIKKCLEEINEYKKIVKEINENEDRKTKKIYHIDLKLLEEHKDKLSTLARIIEELILKTFLCPPSKWGKIQRIIRAVWNIVVGEDDERLDRRKLGLRSLVAKVLIKVRDFAIERQKFKIRELIEVIKEECGFTLTLDEVRRLIRAIFNCVIRGVKKLGENAVVEIKELNKEFKTLYEIIKQNINSNSVEKCEKVIEKKIEENGGEILEMELYELIVEKLKFVEEVFYKALEKLKKLGVIYEPKPGLLRIT.

This is an uncharacterized protein from Methanocaldococcus jannaschii (strain ATCC 43067 / DSM 2661 / JAL-1 / JCM 10045 / NBRC 100440) (Methanococcus jannaschii).